The chain runs to 136 residues: MLAPKKQKFRKAHKGRVMSKAKAGMTLAFGSFGLKSIDGWRVTARQIEAGRKAATRCMKRQGRLWIRIFPDVPVSKKPAEVRMGKGKGAPEFFAVRVSPGRIMFEIEGVEENIALRALELASAKLPVRTRIVRRYE.

Belongs to the universal ribosomal protein uL16 family. Part of the 50S ribosomal subunit.

Functionally, binds 23S rRNA and is also seen to make contacts with the A and possibly P site tRNAs. The chain is Large ribosomal subunit protein uL16 from Rickettsia typhi (strain ATCC VR-144 / Wilmington).